A 227-amino-acid polypeptide reads, in one-letter code: Ion-translocating oxidoreductase complex subunit E (227 aa).

The next 5 helical transmembrane spans lie at 34–56, 68–88, 91–111, 127–147, and 181–201; these read AINAIGLGMTTTLVLTITNTIIS, IPIYMMIISSVVTSIEMLLHA, FNLYQSLGIFIPLIVTNCIIV, FFDGIFIGLGSMFAMFAVGSI, and TIILAVFPPGGFLILGFLIAI.

The protein belongs to the NqrDE/RnfAE family. As to quaternary structure, the complex is composed of six subunits: RnfA, RnfB, RnfC, RnfD, RnfE and RnfG.

Its subcellular location is the cell inner membrane. Functionally, part of a membrane-bound complex that couples electron transfer with translocation of ions across the membrane. This Buchnera aphidicola subsp. Acyrthosiphon pisum (strain APS) (Acyrthosiphon pisum symbiotic bacterium) protein is Ion-translocating oxidoreductase complex subunit E.